The primary structure comprises 502 residues: Myocilin (502 aa).

Positions 1–31 are cleaved as a signal peptide; the sequence is MPSCAYCCSCGPKMPALQLLFLACLVWGMGA. The stretch at 82–183 forms a coiled coil; sequence ADLESTKARV…QEVARLRRGQ (102 aa). Residues 166–198 are disordered; sequence ARRLEGSSQEVARLRRGQCPSTHHPSQDMLPGS. Asn-229 carries N-linked (GlcNAc...) asparagine glycosylation. The region spanning 242–501 is the Olfactomedin-like domain; the sequence is GCGVLMWVGE…MVTYDIKLSE (260 aa). A disulfide bridge connects residues Cys-243 and Cys-431. The Ca(2+) site is built by Asp-378, Asn-426, Ala-427, Val-475, and Asp-476.

As to quaternary structure, homodimer (via N-terminus). Can also form higher oligomers. Interacts with OLFM3, FN1, NRCAM, GLDN and NFASC. Interacts (via N-terminus) with MYL2. Interacts with SFRP1, FRZB, FZD7, FZD10, FZD1 and WIF1; regulates Wnt signaling. Interacts with SNTA1; regulates muscle hypertrophy. Interacts with ERBB2 and ERBB3; activates ERBB2-ERBB3 signaling pathway. Interacts with SNCG; affects its secretion and its aggregation. Palmitoylated. Post-translationally, undergoes a calcium-dependent proteolytic cleavage at Gln-225 by CAPN2 in the endoplasmic reticulum. The result is the production of two fragments, one of 35 kDa containing the C-terminal olfactomedin-like domain, and another of 20 kDa containing the N-terminal leucine zipper-like domain. In terms of processing, glycosylated. In terms of tissue distribution, highly expressed in skeletal muscle and retina. Also detected at lower levels in thyroid gland but not in other endocrine glands such as the adrenal or pituitary glands.

It localises to the secreted. It is found in the golgi apparatus. The protein resides in the cytoplasmic vesicle. Its subcellular location is the extracellular space. The protein localises to the extracellular matrix. It localises to the extracellular exosome. It is found in the mitochondrion. The protein resides in the mitochondrion intermembrane space. Its subcellular location is the mitochondrion inner membrane. The protein localises to the mitochondrion outer membrane. It localises to the rough endoplasmic reticulum. It is found in the cell projection. The protein resides in the cilium. Its subcellular location is the endoplasmic reticulum. Its function is as follows. Secreted glycoprotein regulating the activation of different signaling pathways in adjacent cells to control different processes including cell adhesion, cell-matrix adhesion, cytoskeleton organization and cell migration. Promotes substrate adhesion, spreading and formation of focal contacts. Negatively regulates cell-matrix adhesion and stress fiber assembly through Rho protein signal transduction. Modulates the organization of actin cytoskeleton by stimulating the formation of stress fibers through interactions with components of Wnt signaling pathways. Promotes cell migration through activation of PTK2 and the downstream phosphatidylinositol 3-kinase signaling. Plays a role in bone formation and promotes osteoblast differentiation in a dose-dependent manner through mitogen-activated protein kinase signaling. Mediates myelination in the peripheral nervous system through ERBB2/ERBB3 signaling. Plays a role as a regulator of muscle hypertrophy through the components of dystrophin-associated protein complex. Involved in positive regulation of mitochondrial depolarization. Plays a role in neurite outgrowth. May participate in the obstruction of fluid outflow in the trabecular meshwork. The chain is Myocilin (Myoc) from Rattus norvegicus (Rat).